Reading from the N-terminus, the 232-residue chain is Ribose-5-phosphate isomerase A (232 aa).

Substrate is bound by residues Thr31–Thr34, Asp87–Asp90, and Lys100–Gly103. Catalysis depends on Glu109, which acts as the Proton acceptor. Substrate is bound at residue Lys127.

It belongs to the ribose 5-phosphate isomerase family. Homodimer.

The catalysed reaction is aldehydo-D-ribose 5-phosphate = D-ribulose 5-phosphate. The protein operates within carbohydrate degradation; pentose phosphate pathway; D-ribose 5-phosphate from D-ribulose 5-phosphate (non-oxidative stage): step 1/1. Functionally, catalyzes the reversible conversion of ribose-5-phosphate to ribulose 5-phosphate. The polypeptide is Ribose-5-phosphate isomerase A (Bifidobacterium longum (strain NCC 2705)).